Reading from the N-terminus, the 296-residue chain is Probable ribosomal RNA small subunit methyltransferase A (296 aa).

The segment covering 1 to 16 (MTDATSGSDPDSTTPV) has biased composition (polar residues). Residues 1-25 (MTDATSGSDPDSTTPVDLTGEDFRD) form a disordered region. 6 residues coordinate S-adenosyl-L-methionine: H44, L46, G72, E93, D121, and N136.

The protein belongs to the class I-like SAM-binding methyltransferase superfamily. rRNA adenine N(6)-methyltransferase family. RsmA subfamily.

Its subcellular location is the cytoplasm. In terms of biological role, specifically dimethylates two adjacent adenosines in the loop of a conserved hairpin near the 3'-end of 16S rRNA in the 30S particle. May play a critical role in biogenesis of 30S subunits. This chain is Probable ribosomal RNA small subunit methyltransferase A, found in Haloquadratum walsbyi (strain DSM 16790 / HBSQ001).